The chain runs to 118 residues: Large ribosomal subunit protein bL19 (118 aa).

The protein belongs to the bacterial ribosomal protein bL19 family.

This protein is located at the 30S-50S ribosomal subunit interface and may play a role in the structure and function of the aminoacyl-tRNA binding site. This Hahella chejuensis (strain KCTC 2396) protein is Large ribosomal subunit protein bL19.